The following is a 124-amino-acid chain: Hemoglobin subunit alpha (124 aa).

The region spanning 1-124 (PLSAADKTII…VAKALSSHYR (124 aa)) is the Globin domain. Residue H57 coordinates O2. A heme b-binding site is contributed by H79.

Belongs to the globin family. Hb 1 is a heterotetramer of two alpha and two beta-1 chains. Hb 2 is a heterotetramer of two alpha and two beta-2 chains. Hb 3 is a heterotetramer of two alpha and two beta-3 chains. As to expression, red blood cells (at protein level).

Its function is as follows. Involved in oxygen transport from gills to the various peripheral tissues. This is Hemoglobin subunit alpha from Somniosus microcephalus (Greenland sleeper shark).